The chain runs to 644 residues: Acetyl-coenzyme A synthetase 2 (644 aa).

CoA contacts are provided by residues 189–192, threonine 307, and asparagine 331; that span reads RGGK. ATP-binding positions include 383–385, 407–412, aspartate 496, and arginine 511; these read GEP and DTWWQT. CoA is bound at residue serine 519. Arginine 522 is a binding site for ATP. Mg(2+)-binding residues include valine 533, histidine 535, and valine 538. The residue at position 605 (lysine 605) is an N6-acetyllysine.

Belongs to the ATP-dependent AMP-binding enzyme family. Mg(2+) serves as cofactor. Acetylated. Deacetylation by the SIR2-homolog deacetylase activates the enzyme.

It carries out the reaction acetate + ATP + CoA = acetyl-CoA + AMP + diphosphate. Its function is as follows. Catalyzes the conversion of acetate into acetyl-CoA (AcCoA), an essential intermediate at the junction of anabolic and catabolic pathways. AcsA undergoes a two-step reaction. In the first half reaction, AcsA combines acetate with ATP to form acetyl-adenylate (AcAMP) intermediate. In the second half reaction, it can then transfer the acetyl group from AcAMP to the sulfhydryl group of CoA, forming the product AcCoA. This Pseudomonas putida (strain ATCC 47054 / DSM 6125 / CFBP 8728 / NCIMB 11950 / KT2440) protein is Acetyl-coenzyme A synthetase 2.